The primary structure comprises 340 residues: Ketol-acid reductoisomerase (NADP(+)) (340 aa).

The 180-residue stretch at 3–182 folds into the KARI N-terminal Rossmann domain; it reads VEMLYEADVK…GSARVGLLVT (180 aa). Residues 26–29, arginine 49, serine 53, and 83–86 each bind NADP(+); these read YGSQ and DEIQ. Residue histidine 108 is part of the active site. Residue glycine 134 participates in NADP(+) binding. Residues 183–328 enclose the KARI C-terminal knotted domain; it reads TFKEETEEDL…AELRKAMPFV (146 aa). Mg(2+) contacts are provided by aspartate 191, glutamate 195, glutamate 227, and glutamate 231. Substrate is bound at residue serine 252.

Belongs to the ketol-acid reductoisomerase family. Mg(2+) is required as a cofactor.

The enzyme catalyses (2R)-2,3-dihydroxy-3-methylbutanoate + NADP(+) = (2S)-2-acetolactate + NADPH + H(+). The catalysed reaction is (2R,3R)-2,3-dihydroxy-3-methylpentanoate + NADP(+) = (S)-2-ethyl-2-hydroxy-3-oxobutanoate + NADPH + H(+). The protein operates within amino-acid biosynthesis; L-isoleucine biosynthesis; L-isoleucine from 2-oxobutanoate: step 2/4. It participates in amino-acid biosynthesis; L-valine biosynthesis; L-valine from pyruvate: step 2/4. Functionally, involved in the biosynthesis of branched-chain amino acids (BCAA). Catalyzes an alkyl-migration followed by a ketol-acid reduction of (S)-2-acetolactate (S2AL) to yield (R)-2,3-dihydroxy-isovalerate. In the isomerase reaction, S2AL is rearranged via a Mg-dependent methyl migration to produce 3-hydroxy-3-methyl-2-ketobutyrate (HMKB). In the reductase reaction, this 2-ketoacid undergoes a metal-dependent reduction by NADPH to yield (R)-2,3-dihydroxy-isovalerate. The sequence is that of Ketol-acid reductoisomerase (NADP(+)) from Streptococcus mutans serotype c (strain ATCC 700610 / UA159).